Consider the following 389-residue polypeptide: Migration and invasion-inhibitory protein (389 aa).

Low complexity predominate over residues 44 to 54; that stretch reads LDYSSSSNNLE. Disordered stretches follow at residues 44-80 and 131-150; these read LDYSSSSNNLEMPLSQETSASSVAPNSQDKRHVWDPL and KRPVSLGGPKGLGPDKAQVP. The segment covering 58-70 has biased composition (polar residues); it reads SQETSASSVAPNS. Basic and acidic residues predominate over residues 71 to 80; the sequence is QDKRHVWDPL. The residue at position 309 (serine 309) is a Phosphoserine.

In terms of assembly, interacts with IGFBP2.

Functionally, inhibits glioma cells invasion and down-regulates adhesion- and motility-associated genes such as NFKB2 and ICAM1. Exhibits opposing effects to IGFBP2 on cell invasion. This is Migration and invasion-inhibitory protein (Miip) from Rattus norvegicus (Rat).